The sequence spans 271 residues: Acyl-[acyl-carrier-protein]--UDP-N-acetylglucosamine O-acyltransferase (271 aa).

This sequence belongs to the transferase hexapeptide repeat family. LpxA subfamily. Homotrimer.

The protein resides in the cytoplasm. It catalyses the reaction a (3R)-hydroxyacyl-[ACP] + UDP-N-acetyl-alpha-D-glucosamine = a UDP-3-O-[(3R)-3-hydroxyacyl]-N-acetyl-alpha-D-glucosamine + holo-[ACP]. The protein operates within glycolipid biosynthesis; lipid IV(A) biosynthesis; lipid IV(A) from (3R)-3-hydroxytetradecanoyl-[acyl-carrier-protein] and UDP-N-acetyl-alpha-D-glucosamine: step 1/6. In terms of biological role, involved in the biosynthesis of lipid A, a phosphorylated glycolipid that anchors the lipopolysaccharide to the outer membrane of the cell. This Sulfurihydrogenibium sp. (strain YO3AOP1) protein is Acyl-[acyl-carrier-protein]--UDP-N-acetylglucosamine O-acyltransferase.